Consider the following 219-residue polypeptide: Probable glucosamine 6-phosphate N-acetyltransferase (219 aa).

The N-acetyltransferase domain maps to 42 to 198 (MKVRPLKDTD…EGPTLKRNAT (157 aa)). Residues T64, 111-114 (KFIH), and 123-125 (EDV) contribute to the substrate site. 133 to 138 (GKQLGK) serves as a coordination point for acetyl-CoA. Substrate is bound by residues 154 to 155 (YK) and R186.

It belongs to the acetyltransferase family. GNA1 subfamily.

The enzyme catalyses D-glucosamine 6-phosphate + acetyl-CoA = N-acetyl-D-glucosamine 6-phosphate + CoA + H(+). The protein operates within nucleotide-sugar biosynthesis; UDP-N-acetyl-alpha-D-glucosamine biosynthesis; N-acetyl-alpha-D-glucosamine 1-phosphate from alpha-D-glucosamine 6-phosphate (route I): step 1/2. The polypeptide is Probable glucosamine 6-phosphate N-acetyltransferase (Drosophila melanogaster (Fruit fly)).